The following is a 614-amino-acid chain: MEISLMKFLFLGIWVYYYSVLDSVSAMDSLLSPKGVNYEVAALMSVKNKMKDEKEVLSGWDINSVDPCTWNMVGCSSEGFVVSLEMASKGLSGILSTSIGELTHLHTLLLQNNQLTGPIPSELGQLSELETLDLSGNRFSGEIPASLGFLTHLNYLRLSRNLLSGQVPHLVAGLSGLSFLDLSFNNLSGPTPNISAKDYRIVGNAFLCGPASQELCSDATPVRNATGLSEKDNSKHHSLVLSFAFGIVVAFIISLMFLFFWVLWHRSRLSRSHVQQDYEFEIGHLKRFSFREIQTATSNFSPKNILGQGGFGMVYKGYLPNGTVVAVKRLKDPIYTGEVQFQTEVEMIGLAVHRNLLRLFGFCMTPEERMLVYPYMPNGSVADRLRDNYGEKPSLDWNRRISIALGAARGLVYLHEQCNPKIIHRDVKAANILLDESFEAIVGDFGLAKLLDQRDSHVTTAVRGTIGHIAPEYLSTGQSSEKTDVFGFGVLILELITGHKMIDQGNGQVRKGMILSWVRTLKAEKRFAEMVDRDLKGEFDDLVLEEVVELALLCTQPHPNLRPRMSQVLKVLEGLVEQCEGGYEARAPSVSRNYSNGHEEQSFIIEAIELSGPR.

Residues 1 to 26 form the signal peptide; it reads MEISLMKFLFLGIWVYYYSVLDSVSA. Topologically, residues 27–242 are extracellular; the sequence is MDSLLSPKGV…NSKHHSLVLS (216 aa). LRR repeat units follow at residues 104–126, 128–151, 152–174, and 176–197; these read HLHT…LGQL, ELET…GFLT, HLNY…VAGL, and GLSF…ISAK. N-linked (GlcNAc...) asparagine glycosylation is found at Asn-186, Asn-193, and Asn-224. Residues 243–263 traverse the membrane as a helical segment; the sequence is FAFGIVVAFIISLMFLFFWVL. Over 264 to 614 the chain is Cytoplasmic; the sequence is WHRSRLSRSH…IEAIELSGPR (351 aa). The residue at position 297 (Thr-297) is a Phosphothreonine. In terms of domain architecture, Protein kinase spans 300 to 576; sequence FSPKNILGQG…QVLKVLEGLV (277 aa). 306–314 provides a ligand contact to ATP; it reads LGQGGFGMV. Thr-323 is modified (phosphothreonine). An ATP-binding site is contributed by Lys-328. The residue at position 380 (Ser-380) is a Phosphoserine. Catalysis depends on Asp-426, which acts as the Proton acceptor. A phosphothreonine mark is found at Thr-459, Thr-460, and Thr-465. Tyr-473 carries the post-translational modification Phosphotyrosine. Ser-475 carries the post-translational modification Phosphoserine. Thr-476 bears the Phosphothreonine mark. Ser-480 is modified (phosphoserine). Thr-555 is subject to Phosphothreonine.

This sequence belongs to the protein kinase superfamily. Ser/Thr protein kinase family.

Its subcellular location is the membrane. It catalyses the reaction L-seryl-[protein] + ATP = O-phospho-L-seryl-[protein] + ADP + H(+). It carries out the reaction L-threonyl-[protein] + ATP = O-phospho-L-threonyl-[protein] + ADP + H(+). This Arabidopsis thaliana (Mouse-ear cress) protein is Probable LRR receptor-like serine/threonine-protein kinase At5g45780.